The chain runs to 405 residues: L-carnitine CoA-transferase (405 aa).

CoA contacts are provided by K97 and R104. D169 serves as the catalytic Nucleophile.

Belongs to the CoA-transferase III family. CaiB subfamily. As to quaternary structure, homodimer.

It localises to the cytoplasm. The catalysed reaction is crotonobetainyl-CoA + (R)-carnitine = crotonobetaine + (R)-carnitinyl-CoA. The enzyme catalyses 4-(trimethylamino)butanoyl-CoA + (R)-carnitine = (R)-carnitinyl-CoA + 4-(trimethylamino)butanoate. It participates in amine and polyamine metabolism; carnitine metabolism. In terms of biological role, catalyzes the reversible transfer of the CoA moiety from gamma-butyrobetainyl-CoA to L-carnitine to generate L-carnitinyl-CoA and gamma-butyrobetaine. Is also able to catalyze the reversible transfer of the CoA moiety from gamma-butyrobetainyl-CoA or L-carnitinyl-CoA to crotonobetaine to generate crotonobetainyl-CoA. This is L-carnitine CoA-transferase from Salmonella choleraesuis (strain SC-B67).